The primary structure comprises 143 residues: Acetyltransferase plu1384 (143 aa).

Positions 1 to 138 (MEIRVFRQDD…ESVIFSKRLI (138 aa)) constitute an N-acetyltransferase domain.

This sequence belongs to the acetyltransferase family. YpeA subfamily.

This Photorhabdus laumondii subsp. laumondii (strain DSM 15139 / CIP 105565 / TT01) (Photorhabdus luminescens subsp. laumondii) protein is Acetyltransferase plu1384.